The primary structure comprises 287 residues: Large ribosomal subunit protein uL2 (287 aa).

Residues 221 to 287 (RGSVMNPCDH…SKRSRGGRDS (67 aa)) form a disordered region. The segment covering 258–287 (KTRKRNKPSNRFVLRKRRRTSKRSRGGRDS) has biased composition (basic residues).

This sequence belongs to the universal ribosomal protein uL2 family. As to quaternary structure, part of the 50S ribosomal subunit. Forms a bridge to the 30S subunit in the 70S ribosome.

One of the primary rRNA binding proteins. Required for association of the 30S and 50S subunits to form the 70S ribosome, for tRNA binding and peptide bond formation. It has been suggested to have peptidyltransferase activity; this is somewhat controversial. Makes several contacts with the 16S rRNA in the 70S ribosome. The sequence is that of Large ribosomal subunit protein uL2 from Prochlorococcus marinus (strain MIT 9313).